A 738-amino-acid chain; its full sequence is uncharacterized protein (738 aa).

Polar residues-rich tracts occupy residues 1-34 (MSSS…QVSS), 140-169 (TSSD…QSPP), and 177-197 (KPFS…STKD). 2 disordered regions span residues 1–51 (MSSS…AASI) and 140–197 (TSSD…STKD). The 72-residue stretch at 363–434 (SRLFLGHLNT…QKLHLEISKI (72 aa)) folds into the RRM domain. A disordered region spans residues 466 to 487 (YPTSSRKRTRSPLMSKGKSYDR).

This is an uncharacterized protein from Schizosaccharomyces pombe (strain 972 / ATCC 24843) (Fission yeast).